Reading from the N-terminus, the 254-residue chain is tRNA (guanine-N(1)-)-methyltransferase (254 aa).

Residues Gly-112 and 131–136 (IGDFIL) each bind S-adenosyl-L-methionine.

Belongs to the RNA methyltransferase TrmD family. Homodimer.

Its subcellular location is the cytoplasm. The catalysed reaction is guanosine(37) in tRNA + S-adenosyl-L-methionine = N(1)-methylguanosine(37) in tRNA + S-adenosyl-L-homocysteine + H(+). Its function is as follows. Specifically methylates guanosine-37 in various tRNAs. This Persephonella marina (strain DSM 14350 / EX-H1) protein is tRNA (guanine-N(1)-)-methyltransferase.